The sequence spans 215 residues: L-fuculose phosphate aldolase (215 aa).

Substrate is bound by residues 28–29 (GN), 43–44 (TG), and 71–72 (SS). E73 acts as the Proton donor/acceptor in catalysis. Zn(2+)-binding residues include E73, H92, H94, and H155.

The protein belongs to the aldolase class II family. AraD/FucA subfamily. In terms of assembly, homotetramer. Zn(2+) serves as cofactor.

It carries out the reaction L-fuculose 1-phosphate = (S)-lactaldehyde + dihydroxyacetone phosphate. Its pathway is carbohydrate degradation; L-fucose degradation; L-lactaldehyde and glycerone phosphate from L-fucose: step 3/3. Its function is as follows. Involved in the degradation of L-fucose and D-arabinose. Catalyzes the reversible cleavage of L-fuculose 1-phosphate (Fuc1P) to yield dihydroxyacetone phosphate (DHAP) and L-lactaldehyde. This Escherichia coli O6:H1 (strain CFT073 / ATCC 700928 / UPEC) protein is L-fuculose phosphate aldolase.